The sequence spans 1550 residues: Cellulose synthase 1 (1550 aa).

The tract at residues 1–741 is catalytic; the sequence is MPEVRSSTQS…KERVLKGTVK (741 aa). 3 consecutive transmembrane segments (helical) span residues 26 to 46, 47 to 67, and 106 to 126; these read GAGLTIGVFGLCALIAATSVT, LPPEQQLIVAFVCVVIFFIVG, and GLLGTMLLVAELYALMMLFLS. A catalytic subdomain A region spans residues 147–240; the sequence is EWPTVDIFVP…YILIFDCDHV (94 aa). D189 is an active-site residue. D236 and D238 together coordinate substrate. The segment at 317–377 is catalytic subdomain B; that stretch reads TAIEQIGGFA…GQRVRWARGM (61 aa). D333 is an active-site residue. Transmembrane regions (helical) follow at residues 398–418, 423–443, 468–488, 507–527, and 547–567; these read LCYLSAMTSFLFAVPRVIFLS, FLFFGQNIIAASPLALLAYAI, VYETTMALFLVRVTIVTLLSP, FDLGAVYPNIILGLIMFGGLA, and LLNSAWAMLSLIIILAAIAVG. The 76-residue stretch at 572-647 folds into the PilZ domain; it reads QKRNSHRIPA…PARIIRAGNG (76 aa). Disordered stretches follow at residues 711–734 and 768–813; these read SSPTKPLAGNALSDDTNNPSRKER and APAH…QPLA. A cyclic di-GMP binding domain region spans residues 742 to 1550; the sequence is MVSLLALLTF…KQLEDERRKS (809 aa). Positions 768–796 are enriched in low complexity; sequence APAHQPEASDLPPLPALLPATSGAAQAGA. Residues 1513–1533 form a helical membrane-spanning segment; that stretch reads VLLVGLLGCILIVSVLARALA.

The protein in the N-terminal section; belongs to the glycosyltransferase 2 family. It in the C-terminal section; belongs to the AcsB/BcsB family. Mg(2+) serves as cofactor.

Its subcellular location is the cell inner membrane. It catalyses the reaction [(1-&gt;4)-beta-D-glucosyl](n) + UDP-alpha-D-glucose = [(1-&gt;4)-beta-D-glucosyl](n+1) + UDP + H(+). It participates in glycan metabolism; bacterial cellulose biosynthesis. Its activity is regulated as follows. Activated by c-di-GMP. Bifunctional protein comprised of a catalytic subunit and a regulatory subunit. The catalytic subunit of cellulose synthase polymerizes uridine 5'-diphosphate glucose to cellulose in a processive way. The thick cellulosic mats generated by this enzyme probably provide a specialized protective environment to the bacterium. The regulatory subunit binds bis-(3'-5') cyclic diguanylic acid (c-di-GMP). In Komagataeibacter xylinus (Gluconacetobacter xylinus), this protein is Cellulose synthase 1 (acsAB).